The following is a 212-amino-acid chain: Redox-sensing transcriptional repressor Rex (212 aa).

The segment at residues 17-56 is a DNA-binding region (H-T-H motif); the sequence is LYARSLRYLLEEGVHSVSSQELGERINVTAAQIRKDLSYF. 91–96 contributes to the NAD(+) binding site; it reads GIGLLG.

It belongs to the transcriptional regulatory Rex family. In terms of assembly, homodimer.

Its subcellular location is the cytoplasm. Modulates transcription in response to changes in cellular NADH/NAD(+) redox state. The protein is Redox-sensing transcriptional repressor Rex of Chloroflexus aurantiacus (strain ATCC 29366 / DSM 635 / J-10-fl).